Here is a 198-residue protein sequence, read N- to C-terminus: tRNA (pseudouridine(54)-N(1))-methyltransferase (198 aa).

S-adenosyl-L-methionine contacts are provided by residues leucine 130, glycine 153, 176-181 (LSPLEL), and cysteine 186.

This sequence belongs to the methyltransferase superfamily. TrmY family. As to quaternary structure, homodimer.

It is found in the cytoplasm. The catalysed reaction is pseudouridine(54) in tRNA + S-adenosyl-L-methionine = N(1)-methylpseudouridine(54) in tRNA + S-adenosyl-L-homocysteine + H(+). Functionally, specifically catalyzes the N1-methylation of pseudouridine at position 54 (Psi54) in tRNAs. The polypeptide is tRNA (pseudouridine(54)-N(1))-methyltransferase (Methanococcus maripaludis (strain C5 / ATCC BAA-1333)).